Consider the following 119-residue polypeptide: Beta-2-microglobulin (119 aa).

Positions 1 to 20 (MGRFVAVALLVLLSLSGLET) are cleaved as a signal peptide. Positions 25–114 (PKIQVYSRHP…VTFSTPKTVK (90 aa)) constitute an Ig-like C1-type domain. C45 and C100 form a disulfide bridge.

This sequence belongs to the beta-2-microglobulin family. As to quaternary structure, heterodimer of an alpha chain and a beta chain. Beta-2-microglobulin is the beta-chain of major histocompatibility complex class I molecules.

The protein localises to the secreted. Functionally, component of the class I major histocompatibility complex (MHC). Involved in the presentation of peptide antigens to the immune system. This Callicebus personatus nigrifrons (Black-fronted titi) protein is Beta-2-microglobulin (B2M).